Here is a 405-residue protein sequence, read N- to C-terminus: L-carnitine CoA-transferase (405 aa).

Lys-97 and Arg-104 together coordinate CoA. The Nucleophile role is filled by Asp-169.

The protein belongs to the CoA-transferase III family. CaiB subfamily. Homodimer.

It localises to the cytoplasm. It catalyses the reaction crotonobetainyl-CoA + (R)-carnitine = crotonobetaine + (R)-carnitinyl-CoA. The catalysed reaction is 4-(trimethylamino)butanoyl-CoA + (R)-carnitine = (R)-carnitinyl-CoA + 4-(trimethylamino)butanoate. It participates in amine and polyamine metabolism; carnitine metabolism. Catalyzes the reversible transfer of the CoA moiety from gamma-butyrobetainyl-CoA to L-carnitine to generate L-carnitinyl-CoA and gamma-butyrobetaine. Is also able to catalyze the reversible transfer of the CoA moiety from gamma-butyrobetainyl-CoA or L-carnitinyl-CoA to crotonobetaine to generate crotonobetainyl-CoA. The polypeptide is L-carnitine CoA-transferase (Salmonella choleraesuis (strain SC-B67)).